Consider the following 226-residue polypeptide: tRNA (guanine-N(7)-)-methyltransferase (226 aa).

Glutamate 57, glutamate 82, aspartate 109, and aspartate 132 together coordinate S-adenosyl-L-methionine. Aspartate 132 is a catalytic residue. Residues lysine 136, aspartate 168, and 205-208 each bind substrate; that span reads TKFE.

It belongs to the class I-like SAM-binding methyltransferase superfamily. TrmB family.

It catalyses the reaction guanosine(46) in tRNA + S-adenosyl-L-methionine = N(7)-methylguanosine(46) in tRNA + S-adenosyl-L-homocysteine. Its pathway is tRNA modification; N(7)-methylguanine-tRNA biosynthesis. Functionally, catalyzes the formation of N(7)-methylguanine at position 46 (m7G46) in tRNA. This chain is tRNA (guanine-N(7)-)-methyltransferase, found in Legionella pneumophila subsp. pneumophila (strain Philadelphia 1 / ATCC 33152 / DSM 7513).